A 292-amino-acid polypeptide reads, in one-letter code: 4-hydroxy-tetrahydrodipicolinate synthase (292 aa).

Pyruvate is bound at residue Thr-45. The active-site Proton donor/acceptor is Tyr-133. Lys-161 acts as the Schiff-base intermediate with substrate in catalysis. Ile-203 serves as a coordination point for pyruvate.

The protein belongs to the DapA family. Homotetramer; dimer of dimers.

It localises to the cytoplasm. It catalyses the reaction L-aspartate 4-semialdehyde + pyruvate = (2S,4S)-4-hydroxy-2,3,4,5-tetrahydrodipicolinate + H2O + H(+). Its pathway is amino-acid biosynthesis; L-lysine biosynthesis via DAP pathway; (S)-tetrahydrodipicolinate from L-aspartate: step 3/4. Catalyzes the condensation of (S)-aspartate-beta-semialdehyde [(S)-ASA] and pyruvate to 4-hydroxy-tetrahydrodipicolinate (HTPA). The chain is 4-hydroxy-tetrahydrodipicolinate synthase from Shigella boydii serotype 18 (strain CDC 3083-94 / BS512).